Here is a 1303-residue protein sequence, read N- to C-terminus: DNA-directed RNA polymerase subunit beta'' (1303 aa).

Zn(2+) is bound by residues Cys225, Cys299, Cys306, and Cys309.

It belongs to the RNA polymerase beta' chain family. RpoC2 subfamily. In terms of assembly, in plastids the minimal PEP RNA polymerase catalytic core is composed of four subunits: alpha, beta, beta', and beta''. When a (nuclear-encoded) sigma factor is associated with the core the holoenzyme is formed, which can initiate transcription. Zn(2+) serves as cofactor.

Its subcellular location is the plastid. It localises to the chloroplast. It carries out the reaction RNA(n) + a ribonucleoside 5'-triphosphate = RNA(n+1) + diphosphate. Functionally, DNA-dependent RNA polymerase catalyzes the transcription of DNA into RNA using the four ribonucleoside triphosphates as substrates. This Rhodomonas salina (Cryptomonas salina) protein is DNA-directed RNA polymerase subunit beta''.